A 632-amino-acid chain; its full sequence is uncharacterized protein (632 aa).

Belongs to the MG032/MG096/MG288 family.

This is an uncharacterized protein from Mycoplasma pneumoniae (strain ATCC 29342 / M129 / Subtype 1) (Mycoplasmoides pneumoniae).